The chain runs to 180 residues: Hypoxanthine-guanine phosphoribosyltransferase (180 aa).

Diphosphate-binding residues include lysine 43 and glycine 44. Positions 99 and 100 each coordinate Mg(2+). Aspartate 103 functions as the Proton acceptor in the catalytic mechanism. GMP is bound by residues lysine 131, phenylalanine 152–isoleucine 153, and aspartate 159. Arginine 165 is a diphosphate binding site.

It belongs to the purine/pyrimidine phosphoribosyltransferase family. It depends on Mg(2+) as a cofactor.

It is found in the cytoplasm. It catalyses the reaction IMP + diphosphate = hypoxanthine + 5-phospho-alpha-D-ribose 1-diphosphate. The catalysed reaction is GMP + diphosphate = guanine + 5-phospho-alpha-D-ribose 1-diphosphate. The protein operates within purine metabolism; IMP biosynthesis via salvage pathway; IMP from hypoxanthine: step 1/1. Its pathway is purine metabolism; GMP biosynthesis via salvage pathway; GMP from guanine: step 1/1. Purine salvage pathway enzyme that catalyzes the transfer of the ribosyl-5-phosphate group from 5-phospho-alpha-D-ribose 1-diphosphate (PRPP) to the N9 position of the 6-oxopurines hypoxanthine and guanine to form the corresponding ribonucleotides IMP (inosine 5'-monophosphate) and GMP (guanosine 5'-monophosphate), with the release of PPi. The chain is Hypoxanthine-guanine phosphoribosyltransferase (hpt) from Streptococcus pyogenes serotype M3 (strain ATCC BAA-595 / MGAS315).